The primary structure comprises 185 residues: Ribosome-recycling factor (185 aa).

This sequence belongs to the RRF family.

It localises to the cytoplasm. Its function is as follows. Responsible for the release of ribosomes from messenger RNA at the termination of protein biosynthesis. May increase the efficiency of translation by recycling ribosomes from one round of translation to another. This is Ribosome-recycling factor from Syntrophobacter fumaroxidans (strain DSM 10017 / MPOB).